A 248-amino-acid chain; its full sequence is PF03932 family protein CutC (248 aa).

Belongs to the CutC family. As to quaternary structure, homodimer.

The protein resides in the cytoplasm. This chain is PF03932 family protein CutC, found in Salmonella paratyphi B (strain ATCC BAA-1250 / SPB7).